The chain runs to 296 residues: Indole-3-glycerol phosphate synthase (296 aa).

Belongs to the TrpC family.

The catalysed reaction is 1-(2-carboxyphenylamino)-1-deoxy-D-ribulose 5-phosphate + H(+) = (1S,2R)-1-C-(indol-3-yl)glycerol 3-phosphate + CO2 + H2O. It functions in the pathway amino-acid biosynthesis; L-tryptophan biosynthesis; L-tryptophan from chorismate: step 4/5. This is Indole-3-glycerol phosphate synthase from Microcystis aeruginosa (strain NIES-843 / IAM M-2473).